Reading from the N-terminus, the 350-residue chain is L-serine dehydratase (350 aa).

Lysine 62 carries the N6-(pyridoxal phosphate)lysine modification.

The protein belongs to the serine/threonine dehydratase family. Pyridoxal 5'-phosphate serves as cofactor.

It is found in the cytoplasm. It carries out the reaction L-serine = pyruvate + NH4(+). It functions in the pathway carbohydrate biosynthesis; gluconeogenesis. This chain is L-serine dehydratase (sds), found in Dictyostelium discoideum (Social amoeba).